Reading from the N-terminus, the 471-residue chain is Ribosome biogenesis protein YTM1 (471 aa).

The interval Val10 to Arg92 is ubiquitin-like (UBL) domain. WD repeat units follow at residues Ser119–Ser158, Gly165–Thr203, and Ser210–Ala249. The tract at residues Glu245 to Val274 is disordered. Positions Leu253 to Asn262 are enriched in polar residues. WD repeat units lie at residues Gly285–Thr325, Thr327–Ser366, Gly372–Gln412, and Gly436–Ser471. A disordered region spans residues Gln412–Gly440.

It belongs to the WD repeat WDR12/YTM1 family. Component of the NOP7 complex, composed of ERB1, NOP7 and YTM1. The complex is held together by ERB1, which interacts with NOP7 via its N-terminal domain and with YTM1 via a high-affinity interaction between the seven-bladed beta-propeller domains of the 2 proteins. The NOP7 complex associates with the 66S pre-ribosome. Interacts (via UBL domain) with MDN1 (via VWFA/MIDAS domain).

The protein resides in the nucleus. It localises to the nucleolus. It is found in the nucleoplasm. Functionally, component of the NOP7 complex, which is required for maturation of the 25S and 5.8S ribosomal RNAs and formation of the 60S ribosome. The chain is Ribosome biogenesis protein YTM1 from Phaeosphaeria nodorum (strain SN15 / ATCC MYA-4574 / FGSC 10173) (Glume blotch fungus).